The following is a 212-amino-acid chain: COP9 signalosome complex subunit 8 (212 aa).

The PCI domain occupies 26 to 193 (TSLSAYEEQA…KPVVTAPPKD (168 aa)).

Belongs to the CSN8 family. In terms of assembly, component of the COP9 signalosome (CSN) complex.

The protein localises to the cytoplasm. It is found in the nucleus. Component of the COP9 signalosome (CSN) complex that acts as an regulator of the ubiquitin (Ubl) conjugation pathway by mediating the deneddylation of the cullin subunit of SCF-type E3 ubiquitin-protein ligase complexes. The CSN complex seems to link protein degradation to sexual development. The chain is COP9 signalosome complex subunit 8 (csnH) from Emericella nidulans (strain FGSC A4 / ATCC 38163 / CBS 112.46 / NRRL 194 / M139) (Aspergillus nidulans).